The chain runs to 493 residues: Cytoplasmic tRNA 2-thiolation protein 2 (493 aa).

Position 489 is a phosphoserine (S489).

The protein belongs to the CTU2/NCS2 family. As to quaternary structure, interacts with NCS6 and URM1. May act by forming a heterodimer with NCS6.

It localises to the cytoplasm. It functions in the pathway tRNA modification; 5-methoxycarbonylmethyl-2-thiouridine-tRNA biosynthesis. In terms of biological role, plays a central role in 2-thiolation of mcm(5)S(2)U at tRNA wobble positions of tRNA(Lys), tRNA(Glu) and tRNA(Gln). May act by forming a heterodimer with NCS6 that ligates sulfur from thiocarboxylated URM1 onto the uridine of tRNAs at wobble position. Prior mcm(5) tRNA modification by the elongator complex is required for 2-thiolation. May also be involved in protein urmylation and in invasive and pseudohyphal growth. Inhibits replication of Brome mosaic virus. The polypeptide is Cytoplasmic tRNA 2-thiolation protein 2 (Saccharomyces cerevisiae (strain ATCC 204508 / S288c) (Baker's yeast)).